Consider the following 111-residue polypeptide: Small ribosomal subunit protein bS18 (111 aa).

The disordered stretch occupies residues 1–32; sequence MDLENTENVENNNNNEEEVKAKGERKAHFNKE. The segment covering 17-32 has biased composition (basic and acidic residues); sequence EEVKAKGERKAHFNKE.

Belongs to the bacterial ribosomal protein bS18 family. Part of the 30S ribosomal subunit. Forms a tight heterodimer with protein bS6.

In terms of biological role, binds as a heterodimer with protein bS6 to the central domain of the 16S rRNA, where it helps stabilize the platform of the 30S subunit. This Brachyspira hyodysenteriae (strain ATCC 49526 / WA1) protein is Small ribosomal subunit protein bS18.